The following is a 388-amino-acid chain: MTGCCTVLGAFLFEYDTPRIVLIRSRKVGLMNRTVQLLILAYVIGWVFVWEKGYQETDSVVSSVTVKAKGVTMTNTSKLGFRIWDVADYVIPAQEENSVFIMTNMVITMNQTQGLCPEIPGKTTVCETDANCTAGSAGTHSSGVATGRCVSFNGTLKTCEVAAWCPVEDDTEVPKPAFLKAAENFTLLVKNNIWYPKFNFSKRNILPNITTAYLKTCIYDAKTDPFCPIFRLGKIVESAGHSFQDIAIEGGIMGIQIKWNCNLDRAASFCLPRYSFRRLDTRDLAHNVSPGYNFRFAKYYSDLKGAEHRTLIKAYGIRFDIIVFGKAGKFDIIPTMINIGSGLALLGVATVLCDVIVLYCMKKRYYYREKKYKYVEDYEQGLGNQMEQ.

The Cytoplasmic portion of the chain corresponds to Met-1–Arg-33. Residues Thr-34–Tyr-54 form a helical membrane-spanning segment. The Extracellular segment spans residues Gln-55–Asn-338. Positions 67 and 69 each coordinate ATP. CTP is bound by residues Lys-67 and Lys-69. Residues Asn-75, Asn-110, Asn-131, Asn-153, and Asn-184 are each glycosylated (N-linked (GlcNAc...) asparagine). 3 disulfide bridges follow: Cys-116-Cys-165, Cys-126-Cys-149, and Cys-132-Cys-159. Positions 186 and 188 each coordinate ATP. CTP is bound at residue Thr-186. Asn-199 and Asn-208 each carry an N-linked (GlcNAc...) asparagine glycan. 2 cysteine pairs are disulfide-bonded: Cys-217/Cys-227 and Cys-261/Cys-270. ATP-binding residues include Asn-293, Arg-295, and Lys-313. Asn-293, Arg-295, and Lys-313 together coordinate CTP. The helical transmembrane segment at Ile-339–Tyr-359 threads the bilayer. Residues Cys-360–Gln-388 lie on the Cytoplasmic side of the membrane.

Belongs to the P2X receptor family. As to quaternary structure, functional P2RXs are organized as homomeric and heteromeric trimers. Forms heterotrimer with P2RX1. Interacts with P2RX7 (via C-terminus); this interaction is functional only in the presence of ATP. Forms heterotrimer with P2RX4; functional differences between homomeric P2RX4 and P2RX4/6 heterotrimer are minor. Interacts with AP1M2.

The protein resides in the cell membrane. It localises to the lysosome membrane. The catalysed reaction is K(+)(in) = K(+)(out). The enzyme catalyses Na(+)(in) = Na(+)(out). It carries out the reaction Ca(2+)(in) = Ca(2+)(out). Its activity is regulated as follows. Activated by ATP. pH-dependent and inhibited by acidic pH. ATP-gated nonselective transmembrane cation channel permeable to potassium, sodium and calcium. CTP, but not GTP or UTP, functions as a weak affinity agonist for P2RX4. Activated by extracellularly released ATP, it plays multiple role in immunity and central nervous system physiology. Could also function as an ATP-gated cation channel of lysosomal membranes. The chain is P2X purinoceptor 4 (P2RX4) from Bos taurus (Bovine).